The chain runs to 738 residues: Flowering time control protein FCA (738 aa).

Residues 1–118 form a disordered region; it reads MHRGGDRSTD…RGDHSDHDNR (118 aa). Composition is skewed to gly residues over residues 52–70 and 81–98; these read RGGGGGGGDGGGGGGGGGR and SGGGGYRSGGGGEYGEPG. Residues 109-118 show a composition bias toward basic and acidic residues; it reads RGDHSDHDNR. RRM domains follow at residues 122-203 and 213-293; these read VKLF…YADG and HKLF…FADP. Disordered stretches follow at residues 292–451 and 566–595; these read DPKR…PAQQ and QQSNLNHQQPTQGQPVQSSNPGAPNAIIPS. The segment covering 301–311 has biased composition (gly residues); that stretch reads SRGGPAFGGPG. Residues 342–358 are compositionally biased toward polar residues; it reads HPSSPRSAPHQFNNFGS. Low complexity predominate over residues 368–377; that stretch reads TVTSTTDTAT. A compositionally biased stretch (polar residues) spans 383-401; that stretch reads FSGNGSLSSQTAVPSSSHM. The segment covering 435 to 451 has biased composition (low complexity); that stretch reads QLQNNQQGQPLQGPAQQ. Positions 575-595 are enriched in polar residues; sequence PTQGQPVQSSNPGAPNAIIPS. One can recognise a WW domain in the interval 609–642; the sequence is VPLTCNWTEHTSPEGFKYYYNSITRESKWDKPEE. The disordered stretch occupies residues 670-738; the sequence is MQQLQSPPQA…QSAQERAWKS (69 aa). A compositionally biased stretch (low complexity) spans 683-706; sequence PAMQPVQQIPQAQQGQQQMQMKQQ. A compositionally biased stretch (polar residues) spans 723-732; sequence RIQQGIQSAQ.

Interacts with FY. Binds to SF1, FIK, RPRD1B, OsI_31983 and MADS8.

It is found in the nucleus. Functionally, plays a major role in the promotion of the transition of the vegetative meristem to reproductive development. Required for RNA-mediated chromatin silencing of a range of loci in the genome. Cotranscriptionally recognizes aberrant RNA and marks it for silencing. Controls alternative cleavage and polyadenylation on pre-mRNAs and antisense RNAs. Regulates flowering time, seed size and cell volume, probably via the modulation of cell size. The polypeptide is Flowering time control protein FCA (Oryza sativa subsp. indica (Rice)).